We begin with the raw amino-acid sequence, 122 residues long: Holo-[acyl-carrier-protein] synthase (122 aa).

2 residues coordinate Mg(2+): Asp-8 and Glu-55.

The protein belongs to the P-Pant transferase superfamily. AcpS family. It depends on Mg(2+) as a cofactor.

It is found in the cytoplasm. The catalysed reaction is apo-[ACP] + CoA = holo-[ACP] + adenosine 3',5'-bisphosphate + H(+). Transfers the 4'-phosphopantetheine moiety from coenzyme A to a Ser of acyl-carrier-protein. The polypeptide is Holo-[acyl-carrier-protein] synthase (Fusobacterium nucleatum subsp. nucleatum (strain ATCC 25586 / DSM 15643 / BCRC 10681 / CIP 101130 / JCM 8532 / KCTC 2640 / LMG 13131 / VPI 4355)).